Reading from the N-terminus, the 567-residue chain is Urease subunit alpha (567 aa).

A Urease domain is found at glycine 128–phenylalanine 567. Ni(2+)-binding residues include histidine 133, histidine 135, and lysine 216. Lysine 216 bears the N6-carboxylysine mark. Position 218 (histidine 218) interacts with substrate. Ni(2+)-binding residues include histidine 245 and histidine 271. The active-site Proton donor is the histidine 319. Aspartate 359 is a binding site for Ni(2+).

The protein belongs to the metallo-dependent hydrolases superfamily. Urease alpha subunit family. In terms of assembly, heterotrimer of UreA (gamma), UreB (beta) and UreC (alpha) subunits. Three heterotrimers associate to form the active enzyme. Requires Ni cation as cofactor. In terms of processing, carboxylation allows a single lysine to coordinate two nickel ions.

It localises to the cytoplasm. It carries out the reaction urea + 2 H2O + H(+) = hydrogencarbonate + 2 NH4(+). It functions in the pathway nitrogen metabolism; urea degradation; CO(2) and NH(3) from urea (urease route): step 1/1. The polypeptide is Urease subunit alpha (Blochmanniella pennsylvanica (strain BPEN)).